The sequence spans 69 residues: Small ribosomal subunit protein bS21 (69 aa).

This sequence belongs to the bacterial ribosomal protein bS21 family.

This chain is Small ribosomal subunit protein bS21, found in Hyphomonas neptunium (strain ATCC 15444).